The primary structure comprises 243 residues: Small ribosomal subunit protein uS2 (243 aa).

It belongs to the universal ribosomal protein uS2 family.

This Aliivibrio salmonicida (strain LFI1238) (Vibrio salmonicida (strain LFI1238)) protein is Small ribosomal subunit protein uS2.